Here is a 488-residue protein sequence, read N- to C-terminus: Altronate oxidoreductase (488 aa).

18–29 (VIQFGEGNFLRA) serves as a coordination point for NAD(+).

Belongs to the mannitol dehydrogenase family. UxaB subfamily.

It carries out the reaction D-altronate + NAD(+) = keto-D-tagaturonate + NADH + H(+). It functions in the pathway carbohydrate metabolism; pentose and glucuronate interconversion. This Pectobacterium atrosepticum (strain SCRI 1043 / ATCC BAA-672) (Erwinia carotovora subsp. atroseptica) protein is Altronate oxidoreductase.